We begin with the raw amino-acid sequence, 222 residues long: Tegument protein UL26 (222 aa).

It belongs to the herpesviridae US22 family. As to quaternary structure, interacts with UL25. Interacts with ISGylation machinery components ISG15, UBA7 and HERC5; these interactions inhibit global protein ISGylation. In terms of processing, ISGylated; ISGylation regulates UL26 stability and inhibits its activities to suppress NF-kappa-B signaling.

The protein localises to the virion tegument. Its subcellular location is the host nucleus. Functionally, plays a role in the inhibition of host NF-kappa-B. This inhibition affects both the canonical and the non-canonical pathways. Blocks the induction of host IKK phosphorylation. May also influence the normal phosphorylation state of several tegument proteins including pp28 in virions. Also suppresses virus-induced ISGylation independent of its own ISGylation. The polypeptide is Tegument protein UL26 (UL26) (Homo sapiens (Human)).